The chain runs to 447 residues: Tubulin beta chain (447 aa).

Positions 11, 69, 138, 142, 143, 144, 204, and 226 each coordinate GTP. Glutamate 69 contacts Mg(2+). Residues 424 to 447 (QYQEARSTDSDEYDNEEYYNQQEE) are disordered. Acidic residues predominate over residues 433–447 (SDEYDNEEYYNQQEE).

This sequence belongs to the tubulin family. In terms of assembly, dimer of alpha and beta chains. A typical microtubule is a hollow water-filled tube with an outer diameter of 25 nm and an inner diameter of 15 nM. Alpha-beta heterodimers associate head-to-tail to form protofilaments running lengthwise along the microtubule wall with the beta-tubulin subunit facing the microtubule plus end conferring a structural polarity. Microtubules usually have 13 protofilaments but different protofilament numbers can be found in some organisms and specialized cells. The cofactor is Mg(2+). Lens specific.

Its subcellular location is the cytoplasm. The protein resides in the cytoskeleton. Its function is as follows. Tubulin is the major constituent of microtubules, a cylinder consisting of laterally associated linear protofilaments composed of alpha- and beta-tubulin heterodimers. Microtubules grow by the addition of GTP-tubulin dimers to the microtubule end, where a stabilizing cap forms. Below the cap, tubulin dimers are in GDP-bound state, owing to GTPase activity of alpha-tubulin. In Enteroctopus dofleini (North Pacific giant octopus), this protein is Tubulin beta chain.